The primary structure comprises 233 residues: Probable septum site-determining protein MinC (233 aa).

This sequence belongs to the MinC family. As to quaternary structure, interacts with MinD and FtsZ.

Functionally, cell division inhibitor that blocks the formation of polar Z ring septums. Rapidly oscillates between the poles of the cell to destabilize FtsZ filaments that have formed before they mature into polar Z rings. Prevents FtsZ polymerization. The chain is Probable septum site-determining protein MinC from Proteus mirabilis (strain HI4320).